The chain runs to 458 residues: D-inositol 3-phosphate glycosyltransferase (458 aa).

1D-myo-inositol 3-phosphate is bound at residue H16. UDP-N-acetyl-alpha-D-glucosamine-binding positions include 22-23 (QP) and G30. 1D-myo-inositol 3-phosphate contacts are provided by residues 27–32 (DAGGMN), K85, Y118, T142, and R162. Positions 236, 241, and 302 each coordinate UDP-N-acetyl-alpha-D-glucosamine. The Mg(2+) site is built by Y311, R312, and S314. The UDP-N-acetyl-alpha-D-glucosamine site is built by E324 and E332. T338 contacts Mg(2+). Residues 428–458 (VAAQNVTGSSSRTRRPWRRRRSTLLPMTGRS) are disordered. The span at 439-449 (RTRRPWRRRRS) shows a compositional bias: basic residues.

Belongs to the glycosyltransferase group 1 family. MshA subfamily. In terms of assembly, homodimer.

The enzyme catalyses 1D-myo-inositol 3-phosphate + UDP-N-acetyl-alpha-D-glucosamine = 1D-myo-inositol 2-acetamido-2-deoxy-alpha-D-glucopyranoside 3-phosphate + UDP + H(+). Functionally, catalyzes the transfer of a N-acetyl-glucosamine moiety to 1D-myo-inositol 3-phosphate to produce 1D-myo-inositol 2-acetamido-2-deoxy-glucopyranoside 3-phosphate in the mycothiol biosynthesis pathway. The chain is D-inositol 3-phosphate glycosyltransferase from Gordonia bronchialis (strain ATCC 25592 / DSM 43247 / BCRC 13721 / JCM 3198 / KCTC 3076 / NBRC 16047 / NCTC 10667) (Rhodococcus bronchialis).